The chain runs to 261 residues: Fructoselysine 6-kinase (261 aa).

Belongs to the carbohydrate kinase PfkB family. In terms of assembly, monomer.

It carries out the reaction N(6)-(D-fructosyl)-L-lysine + ATP = N(6)-(6-phospho-D-fructosyl)-L-lysine + ADP + H(+). It functions in the pathway carbohydrate metabolism; fructoselysine degradation; D-glucose 6-phosphate and lysine from fructoselysine: step 1/2. Functionally, catalyzes the ATP-dependent phosphorylation of fructoselysine to fructoselysine 6-phosphate. May function in a fructoselysine degradation pathway that allows S.flexneri to grow on fructoselysine or psicoselysine. The chain is Fructoselysine 6-kinase (frlD) from Shigella flexneri.